Consider the following 294-residue polypeptide: NAD kinase (294 aa).

Aspartate 73 (proton acceptor) is an active-site residue. NAD(+) is bound by residues 73–74 (DG), 147–148 (NE), histidine 158, arginine 175, aspartate 177, and 188–193 (TAYALS).

This sequence belongs to the NAD kinase family. A divalent metal cation serves as cofactor.

The protein localises to the cytoplasm. The enzyme catalyses NAD(+) + ATP = ADP + NADP(+) + H(+). In terms of biological role, involved in the regulation of the intracellular balance of NAD and NADP, and is a key enzyme in the biosynthesis of NADP. Catalyzes specifically the phosphorylation on 2'-hydroxyl of the adenosine moiety of NAD to yield NADP. The chain is NAD kinase from Tolumonas auensis (strain DSM 9187 / NBRC 110442 / TA 4).